Consider the following 336-residue polypeptide: UDP-glucose 4-epimerase (336 aa).

NAD(+)-binding positions include 11 to 12 (YI), 31 to 36 (DNLINS), 58 to 59 (DI), 80 to 84 (FAGLK), N99, S124, Y149, K153, and F178. Positions 124 and 149 each coordinate substrate. The Proton acceptor role is filled by Y149. Residues N179, 199–200 (NL), 216–218 (LVY), R231, and 290–293 (RPGD) each bind substrate.

It belongs to the NAD(P)-dependent epimerase/dehydratase family. As to quaternary structure, homodimer. Requires NAD(+) as cofactor.

The catalysed reaction is UDP-alpha-D-glucose = UDP-alpha-D-galactose. Its pathway is carbohydrate metabolism; galactose metabolism. Its function is as follows. Involved in the metabolism of galactose. Catalyzes the conversion of UDP-galactose (UDP-Gal) to UDP-glucose (UDP-Glc) through a mechanism involving the transient reduction of NAD. This chain is UDP-glucose 4-epimerase (galE), found in Yersinia enterocolitica.